The chain runs to 248 residues: MLAIISSAKTLNFEKLAPKTELTIPMFLTLTNKLLSTLQSYSENQLSKIMNISAKLAHINKERFKDFDNQESKAAIFAYAGDVFNNIHIEKLTNHALNFLQSHLLIISGLYGGLKPLDTIKPYRLEMATKLNEINLTNFWQDEITNYINKILAKQKNKYLLNLASQEYSSVINPNKLKYQLVNVHFKENRNGKLSTIGINAKKARGAMVKVIANNLIDSPELLKNFSYLGYAFSTKHSSDNELVFIKS.

This sequence belongs to the UPF0246 family.

The sequence is that of UPF0246 protein RAF_ORF0648 from Rickettsia africae (strain ESF-5).